The chain runs to 155 residues: Xanthine-guanine phosphoribosyltransferase (155 aa).

Residues 37-38 (RG), Arg-69, and 90-98 (EDLVDTGTT) each bind 5-phospho-alpha-D-ribose 1-diphosphate. A GMP-binding site is contributed by Arg-69. Asp-91 contributes to the Mg(2+) binding site. Residues Asp-94 and Ile-137 each contribute to the guanine site. Xanthine-binding residues include Asp-94 and Ile-137. Residues 94–98 (DTGTT) and 136–137 (WI) each bind GMP.

The protein belongs to the purine/pyrimidine phosphoribosyltransferase family. XGPT subfamily. In terms of assembly, homotetramer. The cofactor is Mg(2+).

The protein localises to the cell inner membrane. It catalyses the reaction GMP + diphosphate = guanine + 5-phospho-alpha-D-ribose 1-diphosphate. The catalysed reaction is XMP + diphosphate = xanthine + 5-phospho-alpha-D-ribose 1-diphosphate. The enzyme catalyses IMP + diphosphate = hypoxanthine + 5-phospho-alpha-D-ribose 1-diphosphate. It functions in the pathway purine metabolism; GMP biosynthesis via salvage pathway; GMP from guanine: step 1/1. The protein operates within purine metabolism; XMP biosynthesis via salvage pathway; XMP from xanthine: step 1/1. Functionally, purine salvage pathway enzyme that catalyzes the transfer of the ribosyl-5-phosphate group from 5-phospho-alpha-D-ribose 1-diphosphate (PRPP) to the N9 position of the 6-oxopurines guanine and xanthine to form the corresponding ribonucleotides GMP (guanosine 5'-monophosphate) and XMP (xanthosine 5'-monophosphate), with the release of PPi. To a lesser extent, also acts on hypoxanthine. This is Xanthine-guanine phosphoribosyltransferase from Aeromonas hydrophila subsp. hydrophila (strain ATCC 7966 / DSM 30187 / BCRC 13018 / CCUG 14551 / JCM 1027 / KCTC 2358 / NCIMB 9240 / NCTC 8049).